A 97-amino-acid polypeptide reads, in one-letter code: Citrate lyase acyl carrier protein (97 aa).

Residue serine 14 is modified to O-(phosphoribosyl dephospho-coenzyme A)serine.

This sequence belongs to the CitD family. As to quaternary structure, oligomer with a subunit composition of (alpha,beta,gamma)6.

It is found in the cytoplasm. Functionally, covalent carrier of the coenzyme of citrate lyase. The protein is Citrate lyase acyl carrier protein of Lactobacillus acidophilus (strain ATCC 700396 / NCK56 / N2 / NCFM).